The sequence spans 421 residues: Indole-3-pyruvate monooxygenase YUCCA8 (421 aa).

30-35 (GAGPSG) is a binding site for FAD. Residue 201-206 (GCGNSG) participates in NADP(+) binding.

This sequence belongs to the FMO family. Requires FAD as cofactor. Expressed in organs undergoing active growth and cell division.

The protein resides in the endoplasmic reticulum. It catalyses the reaction indole-3-pyruvate + NADPH + O2 + H(+) = (indol-3-yl)acetate + CO2 + NADP(+) + H2O. Involved in auxin biosynthesis. Converts the indole-3-pyruvic acid (IPA) produced by the TAA family to indole-3-acetic acid (IAA). Seems not able to use tryptamine (TAM) as substrate. Probably responsible for auxin biosynthesis in leaves and involved in the regulation of lateral leaf growth. Required for maintaining water homeostasis and an appropriate root to shoot ratio. Required for the inhibition of root growth by ethylene in etiolated seedlings. Functions downstream of the ethylene-response transcription factor EIL1. In Oryza sativa subsp. indica (Rice), this protein is Indole-3-pyruvate monooxygenase YUCCA8.